The following is a 442-amino-acid chain: Choline monooxygenase, chloroplastic (442 aa).

The transit peptide at 1–58 (MASSASMLINYPTTFCGVRNSSNPNNDQFSDQINIPSSLNNNINISKITSKTNKIIPK) directs the protein to the chloroplast. The 107-residue stretch at 123–229 (WQVAGYSDQI…VAIWGPFVLI (107 aa)) folds into the Rieske domain. Positions 165, 167, 184, and 187 each coordinate [2Fe-2S] cluster. The Fe cation site is built by His290 and His295.

Belongs to the choline monooxygenase family. The cofactor is [2Fe-2S] cluster. Fe cation serves as cofactor. Mg(2+) is required as a cofactor.

Its subcellular location is the plastid. The protein resides in the chloroplast stroma. The catalysed reaction is choline + 2 reduced [2Fe-2S]-[ferredoxin] + O2 + 2 H(+) = betaine aldehyde hydrate + 2 oxidized [2Fe-2S]-[ferredoxin] + H2O. It participates in amine and polyamine biosynthesis; betaine biosynthesis via choline pathway; betaine aldehyde from choline (monooxygenase route): step 1/1. Functionally, catalyzes the first step of the osmoprotectant glycine betaine synthesis. The chain is Choline monooxygenase, chloroplastic (CMO) from Amaranthus tricolor (Joseph's coat).